A 212-amino-acid chain; its full sequence is Thymidylate kinase (212 aa).

An ATP-binding site is contributed by 11 to 18; the sequence is GMEGAGKS.

Belongs to the thymidylate kinase family.

The enzyme catalyses dTMP + ATP = dTDP + ADP. Functionally, phosphorylation of dTMP to form dTDP in both de novo and salvage pathways of dTTP synthesis. The sequence is that of Thymidylate kinase from Colwellia psychrerythraea (strain 34H / ATCC BAA-681) (Vibrio psychroerythus).